Consider the following 280-residue polypeptide: Nucleotide-binding protein Mfla_0145 (280 aa).

8–15 is a binding site for ATP; the sequence is GLSGSGKS. Residue 57 to 60 coordinates GTP; sequence DTRS.

This sequence belongs to the RapZ-like family.

Functionally, displays ATPase and GTPase activities. This chain is Nucleotide-binding protein Mfla_0145, found in Methylobacillus flagellatus (strain ATCC 51484 / DSM 6875 / VKM B-1610 / KT).